The primary structure comprises 682 residues: Epithelial sodium channel subunit alpha (682 aa).

Over 1–111 (MLMRLLPLPS…CSKHNRMKTA (111 aa)) the chain is Cytoplasmic. The interval 34-69 (AQGPLPPQPLQGPLKGDKCEQPGLGPEPTAPQQHTE) is disordered. The chain crosses the membrane as a helical span at residues 112 to 132 (FWAVLWLCTFGMMYWQFALLF). Residues 133 to 586 (GEYFSYPVSL…SQWSLWFGSS (454 aa)) lie on the Extracellular side of the membrane. Intrachain disulfides connect cysteine 159-cysteine 329, cysteine 253-cysteine 260, cysteine 306-cysteine 313, cysteine 418-cysteine 503, cysteine 440-cysteine 480, cysteine 440-cysteine 499, cysteine 444-cysteine 495, cysteine 453-cysteine 480, cysteine 453-cysteine 503, and cysteine 455-cysteine 469. A glycan (N-linked (GlcNAc...) asparagine) is linked at asparagine 191. The tract at residues 201 to 267 (RSRRSLADTL…SDCFYQTSSS (67 aa)) is gating release of inhibition by proteolysis (GRIP); protease-sensitive region that is responsible for the proteolytic activation of the channel. Positions 221 to 240 (PEPRRARSSDPSSVRDNNPR) are disordered. Asparagine 504 carries N-linked (GlcNAc...) asparagine glycosylation. A helical transmembrane segment spans residues 587 to 607 (VLSVVEMAEFMFDLLVITLLM). Residues 608-682 (LLRRFRSRYW…SSAACAPREP (75 aa)) lie on the Cytoplasmic side of the membrane. A PY motif; recruits WW domain-containing proteins and is thereby required for ubiquitination and inhibition of the channel by NEDD4 and NEDD4L motif is present at residues 653–657 (PPPAY).

The protein belongs to the amiloride-sensitive sodium channel (TC 1.A.6) family. SCNN1A subfamily. In terms of assembly, heterotrimer; containing an alpha/SCNN1A, a beta/SCNN1B and a gamma/SCNN1G subunit. Interacts with WWP1 (via WW domains). Interacts with WWP2 (via WW domains); inhibits the channel. Interacts with BPIFA1; the interaction is indirect via SCNN1B and inhibits the proteolytic processing of SCNN1A and SCNN1G and the activation of ENaC. Interacts with the full-length immature form of PCSK9 (pro-PCSK9). Ubiquitinated. Can be ubiquitinated at multiple sites and undergo monoubiquitination and polyubiquitination. Ubiquitination by NEDD4 or NEDD4L inhibits the ENaC channel through endocytosis, intracellular retention and degradation of its individual subunits. Post-translationally, N-glycosylated. In terms of processing, ENaC is activated through the proteolytic maturation of its subunits. Furin cleaves the SCNN1A subunit, which results in a stepwise increase in the open probability of the channel due to the release of an inhibitory tract. BPIFA1, which is recruited by the SCNN1B subunit, prevents the proteolytic activation of ENaC.

It is found in the apical cell membrane. Its subcellular location is the cell projection. The protein resides in the cilium. The protein localises to the cytoplasmic granule. It localises to the cytoplasm. It is found in the cytoplasmic vesicle. Its subcellular location is the secretory vesicle. The protein resides in the acrosome. The protein localises to the flagellum. The catalysed reaction is Na(+)(in) = Na(+)(out). With respect to regulation, originally identified and characterized by its inhibition by the diuretic drug amiloride. Its function is as follows. This is one of the three pore-forming subunits of the heterotrimeric epithelial sodium channel (ENaC), a critical regulator of sodium balance and fluid homeostasis. ENaC operates in epithelial tissues, where it mediates the electrodiffusion of sodium ions from extracellular fluid through the apical membrane of cells, with water following osmotically. It plays a key role in maintaining sodium homeostasis through electrogenic sodium reabsorption in the kidneys. Additionally, ENaC is essential for airway surface liquid homeostasis, which is crucial for proper mucus clearance. This chain is Epithelial sodium channel subunit alpha, found in Cavia porcellus (Guinea pig).